The chain runs to 466 residues: Alpha-1A adrenergic receptor (466 aa).

The Extracellular segment spans residues 1 to 27 (MVFLSGNASDSSNCTQPPAPVNISKAI). Asn7, Asn13, and Asn22 each carry an N-linked (GlcNAc...) asparagine glycan. The chain crosses the membrane as a helical span at residues 28–51 (LLGVILGGLILFGVLGNILVILSV). Over 52-64 (ACHRHLHSVTHYY) the chain is Cytoplasmic. Residues 65 to 88 (IVNLAVADLLLTSTVLPFSAIFEV) form a helical membrane-spanning segment. At 89-99 (LGYWAFGRVFC) the chain is on the extracellular side. An intrachain disulfide couples Cys99 to Cys176. Residues 100–122 (NIWAAVDVLCCTASIMGLCIISI) traverse the membrane as a helical segment. Residues 123 to 143 (DRYIGVSYPLRYPTIVTQRRG) are Cytoplasmic-facing. The chain crosses the membrane as a helical span at residues 144–167 (LMALLCVWALSLVISIGPLFGWRQ). At 168 to 181 (PAPEDETICQINEE) the chain is on the extracellular side. Residues 182 to 205 (PGYVLFSALGSFYLPLAIILVMYC) form a helical membrane-spanning segment. The Cytoplasmic segment spans residues 206 to 273 (RVYVVAKRES…FSREKKAAKT (68 aa)). Ser215 is modified (phosphoserine; by PKA). The helical transmembrane segment at 274–297 (LGIVVGCFVLCWLPFFLVMPIGSF) threads the bilayer. Over 298–305 (FPDFKPSE) the chain is Extracellular. A helical transmembrane segment spans residues 306–329 (TVFKIVFWLGYLNSCINPIIYPCS). At 330 to 466 (SQEFKKAFQN…ISLSENGEEV (137 aa)) the chain is on the cytoplasmic side. The Nuclear localization signal signature appears at 334 to 349 (KKAFQNVLRIQCLCRK). The S-palmitoyl cysteine moiety is linked to residue Cys345.

It belongs to the G-protein coupled receptor 1 family. Adrenergic receptor subfamily. ADRA1A sub-subfamily. As to quaternary structure, homo- and heterooligomer. Heterooligomerizes with ADRA1B homooligomers in cardiac myocytes. Interacts with CAVIN4. C-terminal Ser or Thr residues may be phosphorylated. As to expression, expressed in heart, brain, liver and prostate, but not in kidney, lung, adrenal, aorta and pituitary. Within the prostate, expressed in the apex, base, periurethral and lateral lobe. Isoform 4 is the most abundant isoform expressed in the prostate with high levels also detected in liver and heart.

The protein resides in the nucleus membrane. The protein localises to the cell membrane. Its subcellular location is the cytoplasm. It localises to the membrane. It is found in the caveola. Its function is as follows. This alpha-adrenergic receptor mediates its action by association with G proteins that activate a phosphatidylinositol-calcium second messenger system. Its effect is mediated by G(q) and G(11) proteins. Nuclear ADRA1A-ADRA1B heterooligomers regulate phenylephrine(PE)-stimulated ERK signaling in cardiac myocytes. This chain is Alpha-1A adrenergic receptor (ADRA1A), found in Homo sapiens (Human).